The following is a 1183-amino-acid chain: Rab11 family-interacting protein 3 (1183 aa).

Residues 423–448 (AEDPSTESLPRKNGQEESKSALPVST) form a disordered region. The segment covering 431–441 (LPRKNGQEESK) has biased composition (basic and acidic residues). EF-hand domains follow at residues 706–741 (EEQSALRAVFQALDQDGDGFVHIEEFIEFAKAYGAE) and 738–773 (YGAEQVKDLTRFLDPSGLGVISFEDFHRGISAISNE). Residues Asp719, Asp721, Asp723, Glu730, Asp751, Ser753, and Asp762 each coordinate Ca(2+). Residues 902–1121 (ELEKDSLESE…NGQIINLSIQ (220 aa)) are a coiled coil. The interval 911–1015 (EEQHARLRQE…LQDEADDITQ (105 aa)) is ARF-binding domain (ABD). Residues 1005 to 1044 (KLQDEADDITQRLNEESESRRKMSDKLSHERHTNQKEKEC) are disordered. An FIP-RBD domain is found at 1121–1183 (QGAKSLFTES…ESNPSILEVK (63 aa)).

Its subcellular location is the recycling endosome membrane. It localises to the cytoplasm. The protein localises to the cytoskeleton. The protein resides in the microtubule organizing center. It is found in the centrosome. Its subcellular location is the cleavage furrow. It localises to the midbody. The protein localises to the golgi apparatus membrane. The protein resides in the golgi apparatus. It is found in the trans-Golgi network membrane. Functionally, downstream effector molecule for Rab11 GTPase which acts as a regulator of endocytic trafficking, cytokinesis and intracellular ciliogenesis by participating in membrane delivery. The protein is Rab11 family-interacting protein 3 (rab11fip3) of Danio rerio (Zebrafish).